We begin with the raw amino-acid sequence, 392 residues long: DNA polymerase IV (392 aa).

Residues 6–186 (IVHLDADAFF…LPIGKLPGVG (181 aa)) enclose the UmuC domain. Positions 10 and 103 each coordinate Mg(2+). The active site involves Glu104.

The protein belongs to the DNA polymerase type-Y family. In terms of assembly, monomer. Mg(2+) serves as cofactor.

It is found in the cytoplasm. The enzyme catalyses DNA(n) + a 2'-deoxyribonucleoside 5'-triphosphate = DNA(n+1) + diphosphate. In terms of biological role, poorly processive, error-prone DNA polymerase involved in untargeted mutagenesis. Copies undamaged DNA at stalled replication forks, which arise in vivo from mismatched or misaligned primer ends. These misaligned primers can be extended by PolIV. Exhibits no 3'-5' exonuclease (proofreading) activity. May be involved in translesional synthesis, in conjunction with the beta clamp from PolIII. The chain is DNA polymerase IV from Opitutus terrae (strain DSM 11246 / JCM 15787 / PB90-1).